The sequence spans 434 residues: Glutamate-1-semialdehyde 2,1-aminomutase (434 aa).

Lysine 266 carries the post-translational modification N6-(pyridoxal phosphate)lysine.

Belongs to the class-III pyridoxal-phosphate-dependent aminotransferase family. HemL subfamily. Homodimer. It depends on pyridoxal 5'-phosphate as a cofactor.

It localises to the cytoplasm. The catalysed reaction is (S)-4-amino-5-oxopentanoate = 5-aminolevulinate. It participates in porphyrin-containing compound metabolism; protoporphyrin-IX biosynthesis; 5-aminolevulinate from L-glutamyl-tRNA(Glu): step 2/2. The chain is Glutamate-1-semialdehyde 2,1-aminomutase from Psychrobacter sp. (strain PRwf-1).